Here is a 183-residue protein sequence, read N- to C-terminus: Ribosome maturation factor RimM (183 aa).

A PRC barrel domain is found at 96 to 171; sequence PDEFYDHELE…VALIDPPEGL (76 aa).

It belongs to the RimM family. In terms of assembly, binds ribosomal protein uS19.

The protein resides in the cytoplasm. In terms of biological role, an accessory protein needed during the final step in the assembly of 30S ribosomal subunit, possibly for assembly of the head region. Essential for efficient processing of 16S rRNA. May be needed both before and after RbfA during the maturation of 16S rRNA. It has affinity for free ribosomal 30S subunits but not for 70S ribosomes. This chain is Ribosome maturation factor RimM, found in Rhodococcus jostii (strain RHA1).